A 1173-amino-acid chain; its full sequence is Pumilio homolog 2 (1173 aa).

5 disordered regions span residues 41-68 (VSSA…PLSG), 265-296 (VSKL…ASPT), 480-518 (QQAA…ESLA), 592-662 (LTGA…SLGF), and 730-759 (PISM…SSSL). A compositionally biased stretch (polar residues) spans 287 to 296 (TPGSRQASPT). Residues 480 to 492 (QQAATQASQGQQQ) show a composition bias toward low complexity. Residues 493–518 (VMRATSNQRPLTPNQAQQGQQPESLA) show a composition bias toward polar residues. Residues 606 to 622 (QQQQQQQQQQHQQQQQQ) are compositionally biased toward low complexity. Residues 623 to 633 (PNANLHSNSFY) show a composition bias toward polar residues. Residues 634–657 (GNSTMSNNSQSSSLFSPGPGQPGS) show a composition bias toward low complexity. Positions 815–1155 (GRSRLLEDFR…HILAKLEKYY (341 aa)) constitute a PUM-HD domain. Pumilio repeat units lie at residues 835-870 (DLMG…LVFS), 871-906 (EILQ…ALAT), 907-942 (RIRG…EMVR), 943-978 (ELDG…FIIE), 979-1014 (AFKG…PILE), 1015-1050 (ELHQ…KIVC), 1051-1086 (EVRG…FLID), 1087-1129 (EICC…IIMH), and 1130-1167 (KIRP…LLVG). The interval 850–854 (SRFIQ) is adenine-nucleotide binding in RNA target. Positions 886–890 (NYVIQ) are uracil-nucleotide binding in RNA target. The interval 922–926 (CRVIQ) is adenine-nucleotide binding in RNA target. The interval 958–962 (NHVVQ) is non-specific-nucleotide binding in RNA target. Positions 994 to 998 (CRVIQ) are adenine-nucleotide binding in RNA target. The interval 1030–1034 (NYVIQ) is uracil-nucleotide binding in RNA target. The segment at 1066 to 1070 (SNVVE) is guanine-nucleotide binding in RNA target. The uracil-nucleotide binding in RNA target stretch occupies residues 1109-1113 (NYVVQ).

Component of a complex with papd4, sympk, tacc3, parn, dazl and cpeb1. Phosphorylated.

Its subcellular location is the cytoplasm. The protein resides in the P-body. The protein localises to the cytoplasmic granule. In terms of biological role, sequence-specific RNA-binding protein that acts as a post-transcriptional repressor by binding the 3'-UTR of mRNA targets. Binds to an RNA consensus sequence, the Pumilio Response Element (PRE), 5'-UGUANAUA-3', that is related to the Nanos Response Element (NRE). Mediates post-transcriptional repression of transcripts via different mechanisms: acts via direct recruitment of deadenylase complexes leading to translational inhibition and mRNA degradation. Also mediates deadenylation-independent repression by promoting accessibility of miRNAs. The sequence is that of Pumilio homolog 2 (pum2) from Xenopus laevis (African clawed frog).